The following is a 535-amino-acid chain: MRIKYPPQTVDRVLIFDTTLRDGEQSPGASLNVDEKLTIARQLARLGVDIIEAGFPFASPGDFEAVQRIAETVGTETGPVICGLARATRQDIEAAAKALKPAYYPRIHTFIATSDIHLEYKLRKTRAEVLEIAQEMVAYAKSFVDDVEFSPEDAGRSDPEFLYEVLERVIDAGATTVNIPDTVGYTTPAEFGALIKGIKENVPNIDRAVISVHGHNDLGLAVANFLEAVKNGARQLECTINGIGERAGNAALEELVMALYVRRQYFNPFLGRPPESEAPLTNINTREIYKTSRLVSNLTGMLIQPNKAIVGANAFAHQSGIHQDGVLKHKQTYEIMDAQLIGLADNQIVLGKLSGRNAFATRLRELGFELSETELNKAFLRFKDLADKKKEITDWDLEAIAKDETQGIDLQGYQLEFVQVSCGDHARPTATVTVRTPSGEELTDAAIGTGPVDAVYRAINRVVQIPNRLIEYSVQSVTAGIDAIGEVTIRLQHQDRIYSGHAANTDIIVASAQAYMNALNRLYRGLEQRALHPQA.

One can recognise a Pyruvate carboxyltransferase domain in the interval 13-274 (VLIFDTTLRD…YFNPFLGRPP (262 aa)). Mn(2+) is bound by residues aspartate 22, histidine 213, histidine 215, and asparagine 249. The regulatory domain stretch occupies residues 414–535 (QLEFVQVSCG…LEQRALHPQA (122 aa)).

This sequence belongs to the alpha-IPM synthase/homocitrate synthase family. LeuA type 1 subfamily. As to quaternary structure, homodimer. Mn(2+) is required as a cofactor.

Its subcellular location is the cytoplasm. The enzyme catalyses 3-methyl-2-oxobutanoate + acetyl-CoA + H2O = (2S)-2-isopropylmalate + CoA + H(+). Its pathway is amino-acid biosynthesis; L-leucine biosynthesis; L-leucine from 3-methyl-2-oxobutanoate: step 1/4. In terms of biological role, catalyzes the condensation of the acetyl group of acetyl-CoA with 3-methyl-2-oxobutanoate (2-ketoisovalerate) to form 3-carboxy-3-hydroxy-4-methylpentanoate (2-isopropylmalate). In Thermosynechococcus vestitus (strain NIES-2133 / IAM M-273 / BP-1), this protein is 2-isopropylmalate synthase.